The following is a 268-amino-acid chain: Aliphatic sulfonates import ATP-binding protein SsuB 3 (268 aa).

The tract at residues 1 to 27 (MTAAEAPLPPLAPRERTATTAAERRTG) is disordered. Over residues 13–26 (PRERTATTAAERRT) the composition is skewed to basic and acidic residues. An ABC transporter domain is found at 32-247 (VSLSGVRKSF…DRNDPEALRY (216 aa)). 64–71 (GPSGTGKT) is an ATP binding site.

This sequence belongs to the ABC transporter superfamily. Aliphatic sulfonates importer (TC 3.A.1.17.2) family. The complex is composed of two ATP-binding proteins (SsuB), two transmembrane proteins (SsuC) and a solute-binding protein (SsuA).

It localises to the cell membrane. It carries out the reaction ATP + H2O + aliphatic sulfonate-[sulfonate-binding protein]Side 1 = ADP + phosphate + aliphatic sulfonateSide 2 + [sulfonate-binding protein]Side 1.. Its function is as follows. Part of the ABC transporter complex SsuABC involved in aliphatic sulfonates import. Responsible for energy coupling to the transport system. The sequence is that of Aliphatic sulfonates import ATP-binding protein SsuB 3 from Rhodococcus jostii (strain RHA1).